We begin with the raw amino-acid sequence, 200 residues long: Recombination protein RecR (200 aa).

The segment at 59–74 (CDICGNVCESSPCPVC) adopts a C4-type zinc-finger fold. The Toprim domain maps to 82 to 177 (SVICVVEEPK…KVTRLASGLP (96 aa)).

The protein belongs to the RecR family.

Functionally, may play a role in DNA repair. It seems to be involved in an RecBC-independent recombinational process of DNA repair. It may act with RecF and RecO. The protein is Recombination protein RecR of Bifidobacterium longum (strain DJO10A).